The following is a 103-amino-acid chain: Large ribosomal subunit protein uL24 (103 aa).

The protein belongs to the universal ribosomal protein uL24 family. Part of the 50S ribosomal subunit.

Its function is as follows. One of two assembly initiator proteins, it binds directly to the 5'-end of the 23S rRNA, where it nucleates assembly of the 50S subunit. Functionally, one of the proteins that surrounds the polypeptide exit tunnel on the outside of the subunit. The polypeptide is Large ribosomal subunit protein uL24 (Treponema pallidum (strain Nichols)).